The chain runs to 251 residues: DNA repair protein RecO (251 aa).

This sequence belongs to the RecO family.

In terms of biological role, involved in DNA repair and RecF pathway recombination. This Acidiphilium cryptum (strain JF-5) protein is DNA repair protein RecO.